Reading from the N-terminus, the 254-residue chain is Nickel import ATP-binding protein NikD (254 aa).

Residues 2–241 (PQQIELRNIA…PKHAVTRSLV (240 aa)) enclose the ABC transporter domain. Residue 36 to 43 (GGSGSGKS) participates in ATP binding.

The protein belongs to the ABC transporter superfamily. Nickel importer (TC 3.A.1.5.3) family. In terms of assembly, the complex is composed of two ATP-binding proteins (NikD and NikE), two transmembrane proteins (NikB and NikC) and a solute-binding protein (NikA).

The protein localises to the cell inner membrane. The enzyme catalyses Ni(2+)(out) + ATP + H2O = Ni(2+)(in) + ADP + phosphate + H(+). Functionally, part of the ABC transporter complex NikABCDE involved in nickel import. Responsible for energy coupling to the transport system. This chain is Nickel import ATP-binding protein NikD, found in Shigella sonnei (strain Ss046).